Consider the following 126-residue polypeptide: Large ribosomal subunit protein eL8 (126 aa).

It belongs to the eukaryotic ribosomal protein eL8 family. In terms of assembly, part of the 50S ribosomal subunit. Probably part of the RNase P complex.

It is found in the cytoplasm. Functionally, multifunctional RNA-binding protein that recognizes the K-turn motif in ribosomal RNA, the RNA component of RNase P, box H/ACA, box C/D and box C'/D' sRNAs. In Cenarchaeum symbiosum (strain A), this protein is Large ribosomal subunit protein eL8.